We begin with the raw amino-acid sequence, 434 residues long: D-amino acid dehydrogenase (434 aa).

3-17 (VIVLGSGVIGTTTAY) lines the FAD pocket.

The protein belongs to the DadA oxidoreductase family. FAD is required as a cofactor.

The enzyme catalyses a D-alpha-amino acid + A + H2O = a 2-oxocarboxylate + AH2 + NH4(+). It functions in the pathway amino-acid degradation; D-alanine degradation; NH(3) and pyruvate from D-alanine: step 1/1. Oxidative deamination of D-amino acids. This chain is D-amino acid dehydrogenase, found in Bordetella petrii (strain ATCC BAA-461 / DSM 12804 / CCUG 43448).